Consider the following 228-residue polypeptide: Cytochrome c oxidase subunit 2 (228 aa).

The Mitochondrial intermembrane portion of the chain corresponds to 1–26 (MATWANLGLQNSSSPLMEQLNFFHDH). Residues 27-48 (TVLILIMITVMITYVMGMLFFN) traverse the membrane as a helical segment. Residues 49–62 (KFTNRYLLHGQTIE) are Mitochondrial matrix-facing. Residues 63 to 82 (IIWTILPAIILMFIAFPSLR) traverse the membrane as a helical segment. The Mitochondrial intermembrane segment spans residues 83 to 228 (LLYLLDEINS…FIKWVSSQLN (146 aa)). Cu cation-binding residues include H161, C196, E198, C200, H204, and M207. E198 contacts Mg(2+).

It belongs to the cytochrome c oxidase subunit 2 family. Component of the cytochrome c oxidase (complex IV, CIV), a multisubunit enzyme composed of a catalytic core of 3 subunits and several supernumerary subunits. The complex exists as a monomer or a dimer and forms supercomplexes (SCs) in the inner mitochondrial membrane with ubiquinol-cytochrome c oxidoreductase (cytochrome b-c1 complex, complex III, CIII). Requires Cu cation as cofactor.

The protein localises to the mitochondrion inner membrane. It carries out the reaction 4 Fe(II)-[cytochrome c] + O2 + 8 H(+)(in) = 4 Fe(III)-[cytochrome c] + 2 H2O + 4 H(+)(out). Functionally, component of the cytochrome c oxidase, the last enzyme in the mitochondrial electron transport chain which drives oxidative phosphorylation. The respiratory chain contains 3 multisubunit complexes succinate dehydrogenase (complex II, CII), ubiquinol-cytochrome c oxidoreductase (cytochrome b-c1 complex, complex III, CIII) and cytochrome c oxidase (complex IV, CIV), that cooperate to transfer electrons derived from NADH and succinate to molecular oxygen, creating an electrochemical gradient over the inner membrane that drives transmembrane transport and the ATP synthase. Cytochrome c oxidase is the component of the respiratory chain that catalyzes the reduction of oxygen to water. Electrons originating from reduced cytochrome c in the intermembrane space (IMS) are transferred via the dinuclear copper A center (CU(A)) of subunit 2 and heme A of subunit 1 to the active site in subunit 1, a binuclear center (BNC) formed by heme A3 and copper B (CU(B)). The BNC reduces molecular oxygen to 2 water molecules using 4 electrons from cytochrome c in the IMS and 4 protons from the mitochondrial matrix. The sequence is that of Cytochrome c oxidase subunit 2 (COII) from Culex quinquefasciatus (Southern house mosquito).